Here is a 151-residue protein sequence, read N- to C-terminus: Putative pre-16S rRNA nuclease (151 aa).

This sequence belongs to the YqgF nuclease family.

It localises to the cytoplasm. In terms of biological role, could be a nuclease involved in processing of the 5'-end of pre-16S rRNA. The sequence is that of Putative pre-16S rRNA nuclease from Thermosynechococcus vestitus (strain NIES-2133 / IAM M-273 / BP-1).